Consider the following 106-residue polypeptide: Starvation responsive small protein A (106 aa).

Residues 15–32 (ILLVNAGLISAYGVRIIF) traverse the membrane as a helical segment.

The protein localises to the cell membrane. Its function is as follows. Involved in starvation response and aggregation stage of the life cycle. May be involved in fruiting body morphogenesis and spore formation. In Dictyostelium discoideum (Social amoeba), this protein is Starvation responsive small protein A.